Consider the following 114-residue polypeptide: MSQKVQNLYEGMYVISATLSDDARHKALDRIQTGITGHGGEIKKLHEQGRRRLAYEIDGHREGYYYLVYFTAPSSAISDLWQEYHLNEDLIRFITLRTDEVMEKIEFKTLDEQQ.

It belongs to the bacterial ribosomal protein bS6 family.

Its function is as follows. Binds together with bS18 to 16S ribosomal RNA. This is Small ribosomal subunit protein bS6 from Protochlamydia amoebophila (strain UWE25).